The sequence spans 157 residues: 2-C-methyl-D-erythritol 2,4-cyclodiphosphate synthase (157 aa).

A divalent metal cation contacts are provided by Asp8 and His10. 4-CDP-2-C-methyl-D-erythritol 2-phosphate contacts are provided by residues 8–10 (DVH) and 34–35 (HS). His42 contacts a divalent metal cation. 4-CDP-2-C-methyl-D-erythritol 2-phosphate is bound by residues 56–58 (DIG), 61–65 (FPDNE), 132–135 (TTTE), Phe139, and Arg142.

The protein belongs to the IspF family. In terms of assembly, homotrimer. Requires a divalent metal cation as cofactor.

The catalysed reaction is 4-CDP-2-C-methyl-D-erythritol 2-phosphate = 2-C-methyl-D-erythritol 2,4-cyclic diphosphate + CMP. It participates in isoprenoid biosynthesis; isopentenyl diphosphate biosynthesis via DXP pathway; isopentenyl diphosphate from 1-deoxy-D-xylulose 5-phosphate: step 4/6. Involved in the biosynthesis of isopentenyl diphosphate (IPP) and dimethylallyl diphosphate (DMAPP), two major building blocks of isoprenoid compounds. Catalyzes the conversion of 4-diphosphocytidyl-2-C-methyl-D-erythritol 2-phosphate (CDP-ME2P) to 2-C-methyl-D-erythritol 2,4-cyclodiphosphate (ME-CPP) with a corresponding release of cytidine 5-monophosphate (CMP). The chain is 2-C-methyl-D-erythritol 2,4-cyclodiphosphate synthase from Desulforamulus reducens (strain ATCC BAA-1160 / DSM 100696 / MI-1) (Desulfotomaculum reducens).